We begin with the raw amino-acid sequence, 328 residues long: Tetraacyldisaccharide 4'-kinase (328 aa).

55 to 62 (TAGGNGKT) lines the ATP pocket.

Belongs to the LpxK family.

It carries out the reaction a lipid A disaccharide + ATP = a lipid IVA + ADP + H(+). The protein operates within glycolipid biosynthesis; lipid IV(A) biosynthesis; lipid IV(A) from (3R)-3-hydroxytetradecanoyl-[acyl-carrier-protein] and UDP-N-acetyl-alpha-D-glucosamine: step 6/6. Functionally, transfers the gamma-phosphate of ATP to the 4'-position of a tetraacyldisaccharide 1-phosphate intermediate (termed DS-1-P) to form tetraacyldisaccharide 1,4'-bis-phosphate (lipid IVA). The chain is Tetraacyldisaccharide 4'-kinase from Escherichia coli O127:H6 (strain E2348/69 / EPEC).